Consider the following 447-residue polypeptide: N-succinylarginine dihydrolase (447 aa).

Substrate contacts are provided by residues 19-28, Asn-110, and 137-138; these read AGLSFGNEAS and HR. Glu-174 is a catalytic residue. Arg-212 is a substrate binding site. His-248 is a catalytic residue. Substrate contacts are provided by Asp-250 and Asn-359. Cys-365 serves as the catalytic Nucleophile.

It belongs to the succinylarginine dihydrolase family. Homodimer.

The catalysed reaction is N(2)-succinyl-L-arginine + 2 H2O + 2 H(+) = N(2)-succinyl-L-ornithine + 2 NH4(+) + CO2. It participates in amino-acid degradation; L-arginine degradation via AST pathway; L-glutamate and succinate from L-arginine: step 2/5. In terms of biological role, catalyzes the hydrolysis of N(2)-succinylarginine into N(2)-succinylornithine, ammonia and CO(2). In Escherichia coli O1:K1 / APEC, this protein is N-succinylarginine dihydrolase.